A 246-amino-acid chain; its full sequence is 3-deoxy-manno-octulosonate cytidylyltransferase (246 aa).

The protein belongs to the KdsB family.

Its subcellular location is the cytoplasm. It carries out the reaction 3-deoxy-alpha-D-manno-oct-2-ulosonate + CTP = CMP-3-deoxy-beta-D-manno-octulosonate + diphosphate. The protein operates within nucleotide-sugar biosynthesis; CMP-3-deoxy-D-manno-octulosonate biosynthesis; CMP-3-deoxy-D-manno-octulosonate from 3-deoxy-D-manno-octulosonate and CTP: step 1/1. Its pathway is bacterial outer membrane biogenesis; lipopolysaccharide biosynthesis. Its function is as follows. Activates KDO (a required 8-carbon sugar) for incorporation into bacterial lipopolysaccharide in Gram-negative bacteria. This chain is 3-deoxy-manno-octulosonate cytidylyltransferase, found in Bradyrhizobium diazoefficiens (strain JCM 10833 / BCRC 13528 / IAM 13628 / NBRC 14792 / USDA 110).